The following is a 197-amino-acid chain: Probable chorismate pyruvate-lyase (197 aa).

Residues Arg-66, Leu-104, and Glu-169 each contribute to the substrate site.

The protein belongs to the UbiC family.

The protein resides in the cytoplasm. The catalysed reaction is chorismate = 4-hydroxybenzoate + pyruvate. It functions in the pathway cofactor biosynthesis; ubiquinone biosynthesis. Functionally, removes the pyruvyl group from chorismate, with concomitant aromatization of the ring, to provide 4-hydroxybenzoate (4HB) for the ubiquinone pathway. This chain is Probable chorismate pyruvate-lyase, found in Albidiferax ferrireducens (strain ATCC BAA-621 / DSM 15236 / T118) (Rhodoferax ferrireducens).